We begin with the raw amino-acid sequence, 496 residues long: Cytosol aminopeptidase (496 aa).

Mn(2+)-binding residues include Lys258 and Asp263. Lys270 is an active-site residue. Residues Asp281, Asp340, and Glu342 each contribute to the Mn(2+) site. The active site involves Arg344.

It belongs to the peptidase M17 family. Mn(2+) is required as a cofactor.

It localises to the cytoplasm. It catalyses the reaction Release of an N-terminal amino acid, Xaa-|-Yaa-, in which Xaa is preferably Leu, but may be other amino acids including Pro although not Arg or Lys, and Yaa may be Pro. Amino acid amides and methyl esters are also readily hydrolyzed, but rates on arylamides are exceedingly low.. The catalysed reaction is Release of an N-terminal amino acid, preferentially leucine, but not glutamic or aspartic acids.. In terms of biological role, presumably involved in the processing and regular turnover of intracellular proteins. Catalyzes the removal of unsubstituted N-terminal amino acids from various peptides. This is Cytosol aminopeptidase (pepA) from Helicobacter pylori (strain ATCC 700392 / 26695) (Campylobacter pylori).